The chain runs to 133 residues: U-scoloptoxin(05)-Sa1a (133 aa).

Positions 1–24 (MPSLCIIALFGTLTFYTLIPSIHT) are cleaved as a signal peptide.

The protein belongs to the scoloptoxin-05 family. In terms of processing, contains 5 disulfide bonds. As to expression, expressed by the venom gland.

It localises to the secreted. This Scolopendra alternans (Florida Keys giant centipede) protein is U-scoloptoxin(05)-Sa1a.